We begin with the raw amino-acid sequence, 687 residues long: Follicle-stimulating hormone receptor (687 aa).

The signal sequence occupies residues 1–17 (MALLLVSLLAFLSLGSG). The 29-residue stretch at 18–46 (CHHQVCHYSNRVFLCQESKVTEIPSDLPR) folds into the LRRNT domain. Residues 18 to 358 (CHHQVCHYSN…EDIMGYDILR (341 aa)) lie on the Extracellular side of the membrane. C23 and C32 are disulfide-bonded. 9 LRR repeats span residues 49-72 (LELRFVLTKLRVIPKGAFSGFGDL), 73-97 (KKIEISQNDVLEVIEANVFSNLPKL), 98-118 (HEIRIEKANNLLYIDHDAFQN), 119-143 (LPNLQYLLISNTGIKHLPAVHKIQS), 144-169 (LQKVLLDIQDNINIHIVERNSFMGLS), 170-192 (FESMILRLSKNGIQEIHNCAFNG), 193-216 (TQLDELNLSDNNNLEELPNDVFQG), 217-240 (ASGPVILDISGTRIHSLPNYGLEN), and 241-259 (LKKLRARSTYNLKKLPSLE). N-linked (GlcNAc...) asparagine glycans are attached at residues N191 and N199. Intrachain disulfides connect C275-C338, C276-C292, C276-C348, and C292-C330. N293 carries an N-linked (GlcNAc...) asparagine glycan. Residue Y327 is modified to Sulfotyrosine. The helical transmembrane segment at 359–379 (VLIWFISILAITGNIIVLVIL) threads the bilayer. Residues 380-390 (ITSQYKLTVPR) lie on the Cytoplasmic side of the membrane. A helical transmembrane segment spans residues 391–413 (FLMCNLAFADLCIGIYLLLIASV). Topologically, residues 414-435 (DIHTKSQYHNYAIDWQTGAGCD) are extracellular. An intrachain disulfide couples C434 to C509. Residues 436-457 (AAGFFTVFGSELSVYTLTAITL) form a helical membrane-spanning segment. Residues 458–477 (ERWHTITHAMQLECKVQLRH) are Cytoplasmic-facing. Residues 478-500 (AASVMLVGWIFGFGVGLLPIFGI) traverse the membrane as a helical segment. Topologically, residues 501 to 520 (STYMKVSICLPMDIDSPLSQ) are extracellular. A helical membrane pass occupies residues 521–542 (LYVMSLLVLNVLAFVVICGCYT). Residues 543-565 (HIYLTVRNPNIVSSSSDTKIAKR) are Cytoplasmic-facing. A helical membrane pass occupies residues 566-589 (MGILIFTDFLCMAPISFFGISASL). Residues 590–600 (KVALITVSKSK) are Extracellular-facing. A helical membrane pass occupies residues 601–622 (ILLVLFYPINSCANPFLYAIFT). At 623–687 (KNFRRDFFIL…LVPLSHLAQN (65 aa)) the chain is on the cytoplasmic side.

The protein belongs to the G-protein coupled receptor 1 family. FSH/LSH/TSH subfamily. As to quaternary structure, homotrimer. Functions as a homotrimer binding the FSH hormone heterodimer composed of CGA and FSHB. Interacts with ARRB2. Interacts with APPL2; interaction is independent of follicle stimulating hormone stimulation. N-glycosylated; indirectly required for FSH-binding, possibly via a conformational change that allows high affinity binding of hormone. Post-translationally, sulfated.

Its subcellular location is the cell membrane. G protein-coupled receptor for follitropin, the follicle-stimulating hormone. Through cAMP production activates the downstream PI3K-AKT and ERK1/ERK2 signaling pathways. The protein is Follicle-stimulating hormone receptor (FSHR) of Equus asinus (Donkey).